The sequence spans 164 residues: IQ domain-containing protein F2 (164 aa).

2 consecutive IQ domains span residues 43–72 and 99–128; these read RTKAAVKIQAWWRGTLVRRTLLHAALRAWI and RERAVIKLQSLVRMWRVRWRYCQVLNAIYI.

This chain is IQ domain-containing protein F2 (IQCF2), found in Homo sapiens (Human).